A 543-amino-acid chain; its full sequence is T-complex protein 1 subunit eta (543 aa).

Residue Met-1 is modified to N-acetylmethionine. Residue Gly-41 coordinates ADP. Gly-41 is a binding site for ATP. An N6-acetyllysine modification is found at Lys-67. Position 92 (Asp-92) interacts with Mg(2+). Residues Gly-93, Thr-94, Thr-95, Ser-96, Ser-164, and Ser-165 each contribute to the ADP site. Gly-93 provides a ligand contact to ATP. Position 96 (Ser-96) interacts with ATP. Lys-250 and Lys-320 each carry N6-acetyllysine. Arg-398 and Gly-409 together coordinate ATP. Gly-409 lines the ADP pocket. A Glycyl lysine isopeptide (Lys-Gly) (interchain with G-Cter in SUMO2) cross-link involves residue Lys-430. Residues Glu-494 and Arg-499 each coordinate ADP. Residue Arg-499 participates in ATP binding. Arg-535 carries the post-translational modification Omega-N-methylarginine.

This sequence belongs to the TCP-1 chaperonin family. In terms of assembly, component of the chaperonin-containing T-complex (TRiC), a hexadecamer composed of two identical back-to-back stacked rings enclosing a protein folding chamber. Each ring is made up of eight different subunits: TCP1/CCT1, CCT2, CCT3, CCT4, CCT5, CCT6A/CCT6, CCT7, CCT8. Interacts with PACRG. Interacts with DLEC1.

The protein localises to the cytoplasm. It carries out the reaction ATP + H2O = ADP + phosphate + H(+). Component of the chaperonin-containing T-complex (TRiC), a molecular chaperone complex that assists the folding of actin, tubulin and other proteins upon ATP hydrolysis. The TRiC complex mediates the folding of WRAP53/TCAB1, thereby regulating telomere maintenance. This chain is T-complex protein 1 subunit eta (CCT7), found in Pongo abelii (Sumatran orangutan).